Reading from the N-terminus, the 184-residue chain is Adenylate kinase 2 (184 aa).

10-15 contacts ATP; that stretch reads GSGKST. The interval 30 to 59 is NMP; that stretch reads STGEILREAISHLSELGRHAQPYMIKGELV. Residues threonine 31, arginine 36, 57-59, 85-88, and glutamine 92 contribute to the AMP site; these read ELV and GYPR. Positions 126–132 are LID; sequence GRSLPDD. Arginine 127 contacts ATP. Arginine 140 provides a ligand contact to AMP. Glutamine 168 is an ATP binding site.

Belongs to the adenylate kinase family. In terms of assembly, monomer.

It is found in the cytoplasm. The enzyme catalyses AMP + ATP = 2 ADP. It functions in the pathway purine metabolism; AMP biosynthesis via salvage pathway; AMP from ADP: step 1/1. Its function is as follows. Catalyzes the reversible transfer of the terminal phosphate group between ATP and AMP. Plays an important role in cellular energy homeostasis and in adenine nucleotide metabolism. In Nostoc sp. (strain PCC 7120 / SAG 25.82 / UTEX 2576), this protein is Adenylate kinase 2.